The following is a 110-amino-acid chain: Nucleoid-associated protein SYO3AOP1_1366 (110 aa).

This sequence belongs to the YbaB/EbfC family. In terms of assembly, homodimer.

It localises to the cytoplasm. The protein localises to the nucleoid. In terms of biological role, binds to DNA and alters its conformation. May be involved in regulation of gene expression, nucleoid organization and DNA protection. This is Nucleoid-associated protein SYO3AOP1_1366 from Sulfurihydrogenibium sp. (strain YO3AOP1).